The chain runs to 240 residues: Probable peptide export permease protein YydJ (240 aa).

6 helical membrane passes run 13-33 (VIII…FLLV), 50-70 (SYTV…AFFI), 97-117 (IAVL…IISL), 126-146 (ALLL…IGTI), 153-173 (ILIS…LVAI), and 210-230 (VLFI…VLRF).

As to quaternary structure, the complex is composed of 2 ATP-binding proteins (YydI), two transmembrane proteins (YydJ).

The protein resides in the cell membrane. Functionally, suggested to be part of an ABC transporter complex YydIJ involved in export of the modified peptide YydF. The chain is Probable peptide export permease protein YydJ (yydJ) from Bacillus subtilis (strain 168).